A 152-amino-acid polypeptide reads, in one-letter code: Early glycoprotein GP48 (152 aa).

The signal sequence occupies residues 1 to 25 (MVMMLRTWRLLPMVLLAAYCYCVFG). Residues N48, N53, N61, N69, N108, N112, N122, N139, and N148 are each glycosylated (N-linked (GlcNAc...) asparagine; by host).

This sequence belongs to the RL11 family. In terms of processing, N-glycosylated and possibly O-glycosylated.

The protein resides in the virion membrane. The chain is Early glycoprotein GP48 (UL4) from Homo sapiens (Human).